An 87-amino-acid chain; its full sequence is UPF0473 protein Dred_0776 (87 aa).

It belongs to the UPF0473 family.

The chain is UPF0473 protein Dred_0776 from Desulforamulus reducens (strain ATCC BAA-1160 / DSM 100696 / MI-1) (Desulfotomaculum reducens).